We begin with the raw amino-acid sequence, 393 residues long: NAD(P)H-quinone oxidoreductase subunit H, chloroplastic (393 aa).

This sequence belongs to the complex I 49 kDa subunit family. As to quaternary structure, NDH is composed of at least 16 different subunits, 5 of which are encoded in the nucleus.

The protein resides in the plastid. Its subcellular location is the chloroplast thylakoid membrane. The catalysed reaction is a plastoquinone + NADH + (n+1) H(+)(in) = a plastoquinol + NAD(+) + n H(+)(out). The enzyme catalyses a plastoquinone + NADPH + (n+1) H(+)(in) = a plastoquinol + NADP(+) + n H(+)(out). Its function is as follows. NDH shuttles electrons from NAD(P)H:plastoquinone, via FMN and iron-sulfur (Fe-S) centers, to quinones in the photosynthetic chain and possibly in a chloroplast respiratory chain. The immediate electron acceptor for the enzyme in this species is believed to be plastoquinone. Couples the redox reaction to proton translocation, and thus conserves the redox energy in a proton gradient. The chain is NAD(P)H-quinone oxidoreductase subunit H, chloroplastic from Nuphar advena (Common spatterdock).